A 173-amino-acid polypeptide reads, in one-letter code: Translocon-associated protein subunit delta (173 aa).

The first 23 residues, 1–23 (MAAMASLGALALLLLSSLSRCSA), serve as a signal peptide directing secretion. Topologically, residues 24-144 (EACLEPQITP…SVDHRGTWNG (121 aa)) are lumenal. A disulfide bridge connects residues C26 and C57. K73 is covalently cross-linked (Glycyl lysine isopeptide (Lys-Gly) (interchain with G-Cter in ubiquitin)). A helical transmembrane segment spans residues 145–165 (PWVSTEVLAAAIGLVIYYLAF). Residues 166–173 (SAKSHIQA) lie on the Cytoplasmic side of the membrane.

Belongs to the TRAP-delta family. Heterotetramer of TRAP-alpha, TRAP-beta, TRAP-delta and TRAP-gamma.

It localises to the endoplasmic reticulum membrane. In terms of biological role, TRAP proteins are part of a complex whose function is to bind calcium to the ER membrane and thereby regulate the retention of ER resident proteins. This Homo sapiens (Human) protein is Translocon-associated protein subunit delta (SSR4).